Here is a 539-residue protein sequence, read N- to C-terminus: Heparanase-like protein 2 (539 aa).

An N-terminal signal peptide occupies residues 1-21; it reads MGFNVVVFLSCLLLLPPVTFG. N-linked (GlcNAc...) asparagine glycans are attached at residues N143, N163, and N181. The active-site Proton donor is the E198. N300 carries an N-linked (GlcNAc...) asparagine glycan. The active-site Nucleophile is E316. N421 carries an N-linked (GlcNAc...) asparagine glycan.

The protein belongs to the glycosyl hydrolase 79 family.

Its subcellular location is the lysosome membrane. It localises to the secreted. In terms of biological role, endoglycosidase which is a cell surface and extracellular matrix-degrading enzyme. Cleaves heparan sulfate proteoglycans (HSPGs) into heparan sulfate side chains and core proteoglycans. The protein is Heparanase-like protein 2 of Arabidopsis thaliana (Mouse-ear cress).